We begin with the raw amino-acid sequence, 132 residues long: Large ribosomal subunit protein uL24 (132 aa).

The protein belongs to the universal ribosomal protein uL24 family. As to quaternary structure, part of the 50S ribosomal subunit.

Its function is as follows. One of two assembly initiator proteins, it binds directly to the 5'-end of the 23S rRNA, where it nucleates assembly of the 50S subunit. One of the proteins that surrounds the polypeptide exit tunnel on the outside of the subunit. This Synechococcus sp. (strain JA-2-3B'a(2-13)) (Cyanobacteria bacterium Yellowstone B-Prime) protein is Large ribosomal subunit protein uL24.